A 309-amino-acid chain; its full sequence is Serine/threonine-protein phosphatase 2A catalytic subunit beta isoform (309 aa).

Mn(2+)-binding residues include Asp-57, His-59, Asp-85, and Asn-117. His-118 (proton donor) is an active-site residue. Positions 167 and 241 each coordinate Mn(2+). Residue Tyr-307 is modified to Phosphotyrosine. At Leu-309 the chain carries Leucine methyl ester.

Belongs to the PPP phosphatase family. PP-1 subfamily. PP2A consists of a common heterodimeric core enzyme (composed of a 36 kDa catalytic subunit (subunit C) and a 65 kDa constant regulatory subunit (PR65) (subunit A)) that associates with a variety of regulatory subunits. Proteins that associate with the core dimer include three families of regulatory subunits B (the R2/B/PR55/B55, R3/B''/PR72/PR130/PR59 and R5/B'/B56 families), the 48 kDa variable regulatory subunit, viral proteins, and cell signaling molecules. Binds PPME1. May indirectly interact with SGO1, most probably through regulatory B56 subunits. Found in a complex with at least ARL2, PPP2CB, PPP2R1A, PPP2R2A, PPP2R5E and TBCD. Interacts with TBCD. Interacts with CTTNBP2NL. Interacts with PTPA. Part of the core of STRIPAK complexes composed of PP2A catalytic and scaffolding subunits, the striatins (PP2A regulatory subunits), the striatin-associated proteins MOB4, STRIP1 and STRIP2, PDCD10 and members of the STE20 kinases, such as STK24 and STK26. It depends on Mn(2+) as a cofactor. In terms of processing, reversibly methyl esterified on Leu-309 by leucine carboxyl methyltransferase 1 (LCMT1) and protein phosphatase methylesterase 1 (PPME1). Carboxyl methylation influences the affinity of the catalytic subunit for the different regulatory subunits, thereby modulating the PP2A holoenzyme's substrate specificity, enzyme activity and cellular localization. Phosphorylation of either threonine (by autophosphorylation-activated protein kinase) or tyrosine results in inactivation of the phosphatase. Auto-dephosphorylation has been suggested as a mechanism for reactivation. Post-translationally, may be monoubiquitinated by NOSIP.

Its subcellular location is the cytoplasm. The protein localises to the nucleus. The protein resides in the chromosome. It localises to the centromere. It is found in the cytoskeleton. Its subcellular location is the spindle pole. The catalysed reaction is O-phospho-L-seryl-[protein] + H2O = L-seryl-[protein] + phosphate. The enzyme catalyses O-phospho-L-threonyl-[protein] + H2O = L-threonyl-[protein] + phosphate. Functionally, catalytic subunit of protein phosphatase 2A (PP2A), a serine/threonine phosphatase involved in the regulation of a wide variety of enzymes, signal transduction pathways, and cellular events. PP2A can modulate the activity of phosphorylase B kinase, casein kinase 2, mitogen-stimulated S6 kinase, and MAP-2 kinase. Part of the striatin-interacting phosphatase and kinase (STRIPAK) complexes. STRIPAK complexes have critical roles in protein (de)phosphorylation and are regulators of multiple signaling pathways including Hippo, MAPK, nuclear receptor and cytoskeleton remodeling. Different types of STRIPAK complexes are involved in a variety of biological processes such as cell growth, differentiation, apoptosis, metabolism and immune regulation. This Bos taurus (Bovine) protein is Serine/threonine-protein phosphatase 2A catalytic subunit beta isoform (PPP2CB).